The chain runs to 175 residues: Co-chaperone protein HscB homolog (175 aa).

The region spanning 7–79 is the J domain; the sequence is SHFELFHLPA…LKRATYLLHL (73 aa).

It belongs to the HscB family. Interacts with HscA and stimulates its ATPase activity.

Functionally, co-chaperone involved in the maturation of iron-sulfur cluster-containing proteins. Seems to help targeting proteins to be folded toward HscA. The protein is Co-chaperone protein HscB homolog of Burkholderia thailandensis (strain ATCC 700388 / DSM 13276 / CCUG 48851 / CIP 106301 / E264).